A 131-amino-acid chain; its full sequence is MATSVPHPKIVKKYTKKFKRHHSDRYHRVAENWRKQKGIDSCVRRRFRGTIPQPNIGYGSNKKTKFLNPAGYKVYLVKNVKDLDVLLLHTKSYAAEIASSVSSRKRVEIVAKAKKLGVKVTNPKGKLNLEA.

This sequence belongs to the eukaryotic ribosomal protein eL32 family. Component of the large ribosomal subunit. Mature ribosomes consist of a small (40S) and a large (60S) subunit. The 40S subunit contains about 32 different proteins and 1 molecule of RNA (18S). The 60S subunit contains 45 different proteins and 3 molecules of RNA (25S, 5.8S and 5S).

Its subcellular location is the cytoplasm. Functionally, component of the ribosome, a large ribonucleoprotein complex responsible for the synthesis of proteins in the cell. The small ribosomal subunit (SSU) binds messenger RNAs (mRNAs) and translates the encoded message by selecting cognate aminoacyl-transfer RNA (tRNA) molecules. The large subunit (LSU) contains the ribosomal catalytic site termed the peptidyl transferase center (PTC), which catalyzes the formation of peptide bonds, thereby polymerizing the amino acids delivered by tRNAs into a polypeptide chain. The nascent polypeptides leave the ribosome through a tunnel in the LSU and interact with protein factors that function in enzymatic processing, targeting, and the membrane insertion of nascent chains at the exit of the ribosomal tunnel. The chain is Large ribosomal subunit protein eL32 from Candida albicans (strain SC5314 / ATCC MYA-2876) (Yeast).